We begin with the raw amino-acid sequence, 1024 residues long: Multidrug resistance protein MdtC (1024 aa).

Transmembrane regions (helical) follow at residues 12-32, 333-353, 360-380, 387-407, 431-451, 463-483, 528-548, 853-873, 875-895, 897-917, 953-973, and 984-1004; these read VATT…FSLL, EVER…FLFL, LIPA…MYLC, LSLM…IVVL, VGFT…PLLL, FAVT…TLTP, WVMV…ISIP, LWLI…LYES, VHPL…LLAL, LFDA…IGIV, PILM…ISSG, and ITIV…TPVV.

The protein belongs to the resistance-nodulation-cell division (RND) (TC 2.A.6) family. MdtC subfamily. In terms of assembly, part of a tripartite efflux system composed of MdtA, MdtB and MdtC. MdtC forms a heteromultimer with MdtB.

The protein localises to the cell inner membrane. The polypeptide is Multidrug resistance protein MdtC (Yersinia enterocolitica serotype O:8 / biotype 1B (strain NCTC 13174 / 8081)).